Reading from the N-terminus, the 122-residue chain is Large ribosomal subunit protein uL14 (122 aa).

Belongs to the universal ribosomal protein uL14 family. As to quaternary structure, part of the 50S ribosomal subunit. Forms a cluster with proteins L3 and L19. In the 70S ribosome, L14 and L19 interact and together make contacts with the 16S rRNA in bridges B5 and B8.

Functionally, binds to 23S rRNA. Forms part of two intersubunit bridges in the 70S ribosome. The chain is Large ribosomal subunit protein uL14 from Gemmatimonas aurantiaca (strain DSM 14586 / JCM 11422 / NBRC 100505 / T-27).